The following is a 169-amino-acid chain: Small ribosomal subunit protein uS9 (169 aa).

Disordered stretches follow at residues 1–29 (MVEPTGIEDVQEYDENSEEYPAEYTTETP) and 128–169 (MDPE…YSKR). Over residues 9-21 (DVQEYDENSEEYP) the composition is skewed to acidic residues. The segment covering 150–169 (VERKKAGLKKARKAPQYSKR) has biased composition (basic residues).

This sequence belongs to the universal ribosomal protein uS9 family.

The sequence is that of Small ribosomal subunit protein uS9 from Thermobifida fusca (strain YX).